Reading from the N-terminus, the 570-residue chain is Sulfite reductase [NADPH] hemoprotein beta-component (570 aa).

Positions 434, 440, 479, and 483 each coordinate [4Fe-4S] cluster. Position 483 (Cys483) interacts with siroheme.

Belongs to the nitrite and sulfite reductase 4Fe-4S domain family. In terms of assembly, alpha(8)-beta(8). The alpha component is a flavoprotein, the beta component is a hemoprotein. Siroheme is required as a cofactor. It depends on [4Fe-4S] cluster as a cofactor.

It catalyses the reaction hydrogen sulfide + 3 NADP(+) + 3 H2O = sulfite + 3 NADPH + 4 H(+). It participates in sulfur metabolism; hydrogen sulfide biosynthesis; hydrogen sulfide from sulfite (NADPH route): step 1/1. In terms of biological role, component of the sulfite reductase complex that catalyzes the 6-electron reduction of sulfite to sulfide. This is one of several activities required for the biosynthesis of L-cysteine from sulfate. The chain is Sulfite reductase [NADPH] hemoprotein beta-component from Shigella dysenteriae serotype 1 (strain Sd197).